The chain runs to 353 residues: DNA integrity scanning protein DisA (353 aa).

The DAC domain maps to 6 to 144 (DKELMNILKI…GGIKYVLRDS (139 aa)). Residues Gly-73, Leu-91, and 104–108 (TRHRT) each bind ATP.

Belongs to the DisA family. Homooctamer. Mg(2+) is required as a cofactor.

It carries out the reaction 2 ATP = 3',3'-c-di-AMP + 2 diphosphate. Its function is as follows. Participates in a DNA-damage check-point that is active prior to asymmetric division when DNA is damaged. DisA forms globular foci that rapidly scan along the chromosomes during sporulation, searching for lesions. When a lesion is present, DisA pauses at the lesion site. This triggers a cellular response that culminates in a temporary block in sporulation initiation. Also has diadenylate cyclase activity, catalyzing the condensation of 2 ATP molecules into cyclic di-AMP (c-di-AMP). c-di-AMP acts as a signaling molecule that couples DNA integrity with progression of sporulation. The rise in c-di-AMP level generated by DisA while scanning the chromosome, operates as a positive signal that advances sporulation; upon encountering a lesion, the DisA focus arrests at the damaged site and halts c-di-AMP synthesis. In Clostridium botulinum (strain 657 / Type Ba4), this protein is DNA integrity scanning protein DisA.